The primary structure comprises 59 residues: Putative potassium channel toxin Ts24 (59 aa).

The first 22 residues, 1–22, serve as a signal peptide directing secretion; it reads MKAFYGILIIFILISMIHLSQQ. 3 disulfides stabilise this stretch: C29-C50, C35-C55, and C39-C57.

It belongs to the short scorpion toxin superfamily. Potassium channel inhibitor family. Alpha-KTx 04 subfamily. Expressed by the venom gland.

The protein resides in the secreted. Potently blocks Kv1.1/KCNA1 (85%), Kv1.2/KCNA2 (91%), Kv1.3/KCNA3 (89%), Kv1.6/KCNA6 (94%), and Shaker (97%). The protein is Putative potassium channel toxin Ts24 of Tityus serrulatus (Brazilian scorpion).